Here is a 521-residue protein sequence, read N- to C-terminus: Glutamyl-tRNA(Gln) amidotransferase subunit B, mitochondrial (521 aa).

The N-terminal 22 residues, Met-1–Phe-22, are a transit peptide targeting the mitochondrion.

It belongs to the GatB/GatE family. GatB subfamily. Subunit of the heterotrimeric GatCAB amidotransferase (AdT) complex, composed of A, B and C subunits.

The protein resides in the mitochondrion. It catalyses the reaction L-glutamyl-tRNA(Gln) + L-glutamine + ATP + H2O = L-glutaminyl-tRNA(Gln) + L-glutamate + ADP + phosphate + H(+). Its function is as follows. Allows the formation of correctly charged Gln-tRNA(Gln) through the transamidation of misacylated Glu-tRNA(Gln) in the mitochondria. The reaction takes place in the presence of glutamine and ATP through an activated gamma-phospho-Glu-tRNA(Gln). In Cryptococcus neoformans var. neoformans serotype D (strain JEC21 / ATCC MYA-565) (Filobasidiella neoformans), this protein is Glutamyl-tRNA(Gln) amidotransferase subunit B, mitochondrial.